Here is a 388-residue protein sequence, read N- to C-terminus: NADH-quinone oxidoreductase subunit D 2 (388 aa).

It belongs to the complex I 49 kDa subunit family. In terms of assembly, NDH-1 is composed of 14 different subunits. Subunits NuoB, C, D, E, F, and G constitute the peripheral sector of the complex.

The protein localises to the cell membrane. It catalyses the reaction a quinone + NADH + 5 H(+)(in) = a quinol + NAD(+) + 4 H(+)(out). NDH-1 shuttles electrons from NADH, via FMN and iron-sulfur (Fe-S) centers, to quinones in the respiratory chain. The immediate electron acceptor for the enzyme in this species is believed to be a menaquinone. Couples the redox reaction to proton translocation (for every two electrons transferred, four hydrogen ions are translocated across the cytoplasmic membrane), and thus conserves the redox energy in a proton gradient. This is NADH-quinone oxidoreductase subunit D 2 from Salinispora tropica (strain ATCC BAA-916 / DSM 44818 / JCM 13857 / NBRC 105044 / CNB-440).